Consider the following 36-residue polypeptide: Glycine-rich protein GWK (36 aa).

The interval 1 to 36 is disordered; the sequence is YKRGGGGWGGGGGWKGGGGGGGGWKGGGGGGKGGGG.

Functionally, possesses antifungal activity against a number of phytopathogenic fungi, including H.sativum and F.culmorum. The chain is Glycine-rich protein GWK from Cucumis melo (Muskmelon).